A 139-amino-acid chain; its full sequence is UDP-glucose 4-epimerase (139 aa).

NAD(+)-binding positions include 11–12 (YI), 31–36 (DNLCNS), 58–59 (DI), 80–84 (FAGLK), N99, and S124. S124 provides a ligand contact to substrate. The Proton acceptor role is filled by Y136.

Belongs to the NAD(P)-dependent epimerase/dehydratase family. Homodimer. Requires NAD(+) as cofactor.

The enzyme catalyses UDP-alpha-D-glucose = UDP-alpha-D-galactose. The protein operates within carbohydrate metabolism; galactose metabolism. Its function is as follows. Involved in the metabolism of galactose. Catalyzes the conversion of UDP-galactose (UDP-Gal) to UDP-glucose (UDP-Glc) through a mechanism involving the transient reduction of NAD. The polypeptide is UDP-glucose 4-epimerase (galE) (Klebsiella pneumoniae).